The following is a 210-amino-acid chain: dTTP/UTP pyrophosphatase (210 aa).

D80 acts as the Proton acceptor in catalysis.

The protein belongs to the Maf family. YhdE subfamily. The cofactor is a divalent metal cation.

Its subcellular location is the cytoplasm. It catalyses the reaction dTTP + H2O = dTMP + diphosphate + H(+). The enzyme catalyses UTP + H2O = UMP + diphosphate + H(+). Its function is as follows. Nucleoside triphosphate pyrophosphatase that hydrolyzes dTTP and UTP. May have a dual role in cell division arrest and in preventing the incorporation of modified nucleotides into cellular nucleic acids. The sequence is that of dTTP/UTP pyrophosphatase from Nitratidesulfovibrio vulgaris (strain ATCC 29579 / DSM 644 / CCUG 34227 / NCIMB 8303 / VKM B-1760 / Hildenborough) (Desulfovibrio vulgaris).